Here is a 216-residue protein sequence, read N- to C-terminus: Uridine kinase (216 aa).

16 to 23 serves as a coordination point for ATP; sequence GASASGKS.

This sequence belongs to the uridine kinase family.

It localises to the cytoplasm. The catalysed reaction is uridine + ATP = UMP + ADP + H(+). It catalyses the reaction cytidine + ATP = CMP + ADP + H(+). It functions in the pathway pyrimidine metabolism; CTP biosynthesis via salvage pathway; CTP from cytidine: step 1/3. Its pathway is pyrimidine metabolism; UMP biosynthesis via salvage pathway; UMP from uridine: step 1/1. The polypeptide is Uridine kinase (Mannheimia succiniciproducens (strain KCTC 0769BP / MBEL55E)).